The chain runs to 188 residues: SAYSvFN domain-containing protein 1 (188 aa).

The span at 1 to 10 (MEQRLAEFRE) shows a compositional bias: basic and acidic residues. 2 disordered regions span residues 1-43 (MEQR…ATPK) and 60-80 (AIAQ…PEST). Residues 1–100 (MEQRLAEFRE…SFLTNITFLK (100 aa)) lie on the Cytoplasmic side of the membrane. 2 stretches are compositionally biased toward low complexity: residues 22 to 43 (STSS…ATPK) and 60 to 75 (AIAQ…AGQQ). Positions 86 to 100 (SSCRQSFLTNITFLK) are middle helical (MH). Residues 101–121 (VLLWLVLLGLFVELEFGLAYF) constitute an intramembrane region (helical). Over 122-188 (VLSMFYWMYV…RTSPSCSSYP (67 aa)) the chain is Cytoplasmic.

It belongs to the SAYSD1 family. In terms of assembly, associates (via N-terminus) with ribosomes. In terms of tissue distribution, enriched in testis; predominantly expressed in round and elongating spermatids.

The protein resides in the endoplasmic reticulum membrane. Its subcellular location is the cytoplasmic vesicle membrane. Functionally, ufmylation 'reader' component of a translocation-associated quality control pathway, a mechanism that takes place when a ribosome has stalled during translation, and which is required to degrade clogged substrates. Specifically recognizes and binds ufmylated ribosomes when a ribosome has stalled, promoting the transport of stalled nascent chain via the TRAPP complex to lysosomes for degradation. This is SAYSvFN domain-containing protein 1 from Mus musculus (Mouse).